The primary structure comprises 126 residues: 13 kDa ribonucleoprotein-associated protein (126 aa).

Belongs to the eukaryotic ribosomal protein eL8 family. As to quaternary structure, component of the U3 snoRNP particle. Binds to the C'/D and B/C motifs in U3 snoRNA. Component of the 25S U4/U6.U5 tri-snRNP particle, a subcomplex of the spliceosome. Binds to the 5' stem-loop of U4 snRNA.

It localises to the nucleus. It is found in the nucleolus. Its function is as follows. Common component of the spliceosome and rRNA processing machinery. In association with the spliceosomal U4/U6.U5 tri-snRNP particle, required for splicing of pre-mRNA. In association with box C/D snoRNPs, required for processing of pre-ribosomal RNA (rRNA) and site-specific 2'-O-methylation of substrate RNAs. Essential for the accumulation and stability of U4 snRNA, U6 snRNA, and box C/D snoRNAs. This Mycosarcoma maydis (Corn smut fungus) protein is 13 kDa ribonucleoprotein-associated protein (SNU13).